The sequence spans 270 residues: Maximins-S type D (270 aa).

An N-terminal signal peptide occupies residues Met1 to Ala18. Propeptides lie at residues Lys19 to Arg35 and Ser52 to Arg65. Residue Asn83 is modified to Asparagine amide. Positions Ser87–Arg100 are excised as a propeptide. A Lysine amide modification is found at Lys118. Positions Ser122–Arg135 are excised as a propeptide. Asparagine amide is present on Asn153. Positions Ser157 to Arg170 are excised as a propeptide. An Asparagine amide modification is found at Asn188. A propeptide spanning residues Ser192 to Arg205 is cleaved from the precursor. Lysine amide is present on Lys223. A propeptide spanning residues Ser227–Arg240 is cleaved from the precursor. Lys258 is modified (lysine amide). Positions Ser262–Lys270 are excised as a propeptide.

This sequence belongs to the maximin-S family. In terms of tissue distribution, expressed by the skin dorsal glands.

The protein resides in the secreted. Functionally, maximin-S1 has no antimicrobial activity. Has no hemolytic activity. In terms of biological role, maximin-S2 has an activity against mycoplasma but has no activity against common Gram-positive and Gram-negative bacteria nor fungi. Has no hemolytic activity. Maximin-S3 has an activity against mycoplasma but has no activity against common Gram-positive and Gram-negative bacteria nor fungi. Has no hemolytic activity. Its function is as follows. Maximin-S4 has an activity against mycoplasma but has no activity against common Gram-positive and Gram-negative bacteria nor fungi. Has no hemolytic activity. Functionally, maximin-S5 has an activity against mycoplasma but has no activity against common Gram-positive and Gram-negative bacteria nor fungi. Has no hemolytic activity. The chain is Maximins-S type D from Bombina maxima (Giant fire-bellied toad).